A 141-amino-acid polypeptide reads, in one-letter code: Large ribosomal subunit protein uL11c (141 aa).

The protein belongs to the universal ribosomal protein uL11 family. As to quaternary structure, part of the ribosomal stalk of the 50S ribosomal subunit. Interacts with L10 and the large rRNA to form the base of the stalk. L10 forms an elongated spine to which L12 dimers bind in a sequential fashion forming a multimeric L10(L12)X complex.

It is found in the plastid. It localises to the chloroplast. Functionally, forms part of the ribosomal stalk which helps the ribosome interact with GTP-bound translation factors. The chain is Large ribosomal subunit protein uL11c from Guillardia theta (Cryptophyte).